Here is a 447-residue protein sequence, read N- to C-terminus: Argininosuccinate synthase (447 aa).

Residues 17 to 25 (AFSGGLDTS) and alanine 43 contribute to the ATP site. Residue tyrosine 99 participates in L-citrulline binding. 2 residues coordinate ATP: glycine 129 and threonine 131. L-aspartate-binding residues include threonine 131, asparagine 135, and aspartate 136. Asparagine 135 lines the L-citrulline pocket. Aspartate 136 is an ATP binding site. Positions 139 and 192 each coordinate L-citrulline. Aspartate 194 is an ATP binding site. The L-citrulline site is built by threonine 201, glutamate 203, and glutamate 280.

The protein belongs to the argininosuccinate synthase family. Type 2 subfamily. Homotetramer.

It is found in the cytoplasm. The catalysed reaction is L-citrulline + L-aspartate + ATP = 2-(N(omega)-L-arginino)succinate + AMP + diphosphate + H(+). It participates in amino-acid biosynthesis; L-arginine biosynthesis; L-arginine from L-ornithine and carbamoyl phosphate: step 2/3. The polypeptide is Argininosuccinate synthase (argG) (Escherichia coli O157:H7).